Reading from the N-terminus, the 61-residue chain is Short neurotoxin 2 (61 aa).

Intrachain disulfides connect C3–C23, C17–C40, C42–C53, and C54–C59.

It belongs to the three-finger toxin family. Short-chain subfamily. Type I alpha-neurotoxin sub-subfamily. In terms of tissue distribution, expressed by the venom gland.

Its subcellular location is the secreted. Binds to muscle nicotinic acetylcholine receptor (nAChR) and inhibit acetylcholine from binding to the receptor, thereby impairing neuromuscular transmission. The sequence is that of Short neurotoxin 2 from Hemachatus haemachatus (Rinkhals).